An 85-amino-acid polypeptide reads, in one-letter code: MAKGQSLQDPFLNALRRERVPVSIYLVNGIKLQGQVESFDQFVILLKNTVSQMVYKHAISTVVPARPFNVSAHQGTAHGEESDAE.

In terms of domain architecture, Sm spans 9 to 68; it reads DPFLNALRRERVPVSIYLVNGIKLQGQVESFDQFVILLKNTVSQMVYKHAISTVVPARPF.

The protein belongs to the Hfq family. Homohexamer.

Its function is as follows. RNA chaperone that binds small regulatory RNA (sRNAs) and mRNAs to facilitate mRNA translational regulation in response to envelope stress, environmental stress and changes in metabolite concentrations. Also binds with high specificity to tRNAs. This is RNA-binding protein Hfq from Shewanella frigidimarina (strain NCIMB 400).